We begin with the raw amino-acid sequence, 120 residues long: Aspartate 1-decarboxylase (120 aa).

The active-site Schiff-base intermediate with substrate; via pyruvic acid is serine 25. A Pyruvic acid (Ser) modification is found at serine 25. Position 57 (threonine 57) interacts with substrate. The Proton donor role is filled by tyrosine 58. 73–75 (GAA) contacts substrate.

Belongs to the PanD family. In terms of assembly, heterooctamer of four alpha and four beta subunits. Pyruvate serves as cofactor. Is synthesized initially as an inactive proenzyme, which is activated by self-cleavage at a specific serine bond to produce a beta-subunit with a hydroxyl group at its C-terminus and an alpha-subunit with a pyruvoyl group at its N-terminus.

The protein resides in the cytoplasm. It catalyses the reaction L-aspartate + H(+) = beta-alanine + CO2. The protein operates within cofactor biosynthesis; (R)-pantothenate biosynthesis; beta-alanine from L-aspartate: step 1/1. Its function is as follows. Catalyzes the pyruvoyl-dependent decarboxylation of aspartate to produce beta-alanine. This is Aspartate 1-decarboxylase from Deinococcus radiodurans (strain ATCC 13939 / DSM 20539 / JCM 16871 / CCUG 27074 / LMG 4051 / NBRC 15346 / NCIMB 9279 / VKM B-1422 / R1).